The sequence spans 164 residues: Ribosome maturation factor RimM (164 aa).

The PRC barrel domain occupies 92 to 164 (PDSEYYVANL…FVVIVPPEFI (73 aa)).

This sequence belongs to the RimM family. As to quaternary structure, binds ribosomal protein uS19.

The protein localises to the cytoplasm. An accessory protein needed during the final step in the assembly of 30S ribosomal subunit, possibly for assembly of the head region. Essential for efficient processing of 16S rRNA. May be needed both before and after RbfA during the maturation of 16S rRNA. It has affinity for free ribosomal 30S subunits but not for 70S ribosomes. This is Ribosome maturation factor RimM from Orientia tsutsugamushi (strain Ikeda) (Rickettsia tsutsugamushi).